The sequence spans 308 residues: Ribosomal RNA large subunit methyltransferase F (308 aa).

This sequence belongs to the methyltransferase superfamily. METTL16/RlmF family.

The protein localises to the cytoplasm. The catalysed reaction is adenosine(1618) in 23S rRNA + S-adenosyl-L-methionine = N(6)-methyladenosine(1618) in 23S rRNA + S-adenosyl-L-homocysteine + H(+). Functionally, specifically methylates the adenine in position 1618 of 23S rRNA. This chain is Ribosomal RNA large subunit methyltransferase F, found in Shigella flexneri serotype 5b (strain 8401).